The sequence spans 375 residues: Platelet-derived growth factor receptor-like protein (375 aa).

An N-terminal signal peptide occupies residues 1 to 21; sequence MKIWLLLGLLLMHEALEDVTG. The segment at 20 to 64 is disordered; that stretch reads TGQHPPKNKRPKEPGENRIKPTNKKVKPKIPKIKDRDSADPTPKT. Residues 40–50 are compositionally biased toward basic residues; the sequence is PTNKKVKPKIP. Residues 62-159 form the Ig-like C2-type 1 domain; that stretch reads PKTQSIMTQM…GYVCRRDEAK (98 aa). Cys96 and Cys143 are disulfide-bonded. N-linked (GlcNAc...) asparagine glycans are attached at residues Asn132 and Asn219. The region spanning 272-373 is the Ig-like C2-type 2 domain; that stretch reads PSTTILASSN…GQTTVATTVE (102 aa). Cys293 and Cys357 are oxidised to a cystine.

In terms of assembly, forms a complex composed of PDGFRL, TNK2 and GRB2.

It is found in the secreted. The chain is Platelet-derived growth factor receptor-like protein (PDGFRL) from Bos taurus (Bovine).